A 472-amino-acid polypeptide reads, in one-letter code: Serine/threonine-protein phosphatase T (472 aa).

TPR repeat units follow at residues 7–40 (ADKL…TKTP), 41–73 (TLFC…EPTF), and 74–107 (AKAY…APQN). Residues Asp217, His219, Asp246, and Asn278 each coordinate Mn(2+). Residue His279 is the Proton donor/acceptor of the active site. Mn(2+) contacts are provided by His327 and His403.

This sequence belongs to the PPP phosphatase family. PP-5 (PP-T) subfamily. Mg(2+) serves as cofactor. It depends on Mn(2+) as a cofactor.

The protein localises to the cytoplasm. It localises to the cytosol. Its subcellular location is the nucleus. It catalyses the reaction O-phospho-L-seryl-[protein] + H2O = L-seryl-[protein] + phosphate. It carries out the reaction O-phospho-L-threonyl-[protein] + H2O = L-threonyl-[protein] + phosphate. With respect to regulation, activated by arachidonic acid. Functionally, may function as a protein phosphatase. The polypeptide is Serine/threonine-protein phosphatase T (Trypanosoma brucei brucei (strain 927/4 GUTat10.1)).